The chain runs to 391 residues: Matrix metalloproteinase-23 (391 aa).

Over 1-18 the chain is Cytoplasmic; the sequence is MGCRACLRPEASGAVQGR. A propeptide spanning residues 1 to 79 is cleaved from the precursor; that stretch reads MGCRACLRPE…LTMSVTRRRR (79 aa). The chain crosses the membrane as a helical span at residues 19-39; it reads WLGAALSGLCLLSALALLEWL. Topologically, residues 40–391 are lumenal; the sequence is GAPTETAWRA…TYSWRVRVRN (352 aa). N-linked (GlcNAc...) asparagine glycans are attached at residues asparagine 93 and asparagine 149. Residue histidine 212 participates in Zn(2+) binding. Glutamate 213 is an active-site residue. The Zn(2+) site is built by histidine 216 and histidine 222. A glycan (N-linked (GlcNAc...) asparagine) is linked at asparagine 233. One can recognise a ShKT domain in the interval 256 to 290; it reads CLDRIFVCASWARKGFCDVRQRLMKRLCPRSCDFC. Disulfide bonds link cysteine 256–cysteine 290, cysteine 263–cysteine 283, and cysteine 272–cysteine 287. In terms of domain architecture, Ig-like C2-type spans 298 to 383; the sequence is VATTTSPTRT…RRHQRVLSTY (86 aa). Asparagine 317 is a glycosylation site (N-linked (GlcNAc...) asparagine). A disulfide bridge links cysteine 322 with cysteine 371.

This sequence belongs to the peptidase M10A family. The cofactor is Zn(2+). N-glycosylated. In terms of processing, proteolytic cleavage might yield an active form. In terms of tissue distribution, expressed at relatively high level in heart, lung and spleen. Not detected in brain, liver, skeletal muscle, kidney and testis.

The protein localises to the endoplasmic reticulum membrane. The protein resides in the membrane. Its activity is regulated as follows. Inhibited by TIMP2. Its function is as follows. Protease. May regulate the surface expression of some potassium channels by retaining them in the endoplasmic reticulum. This chain is Matrix metalloproteinase-23 (Mmp23), found in Mus musculus (Mouse).